The primary structure comprises 105 residues: NADH dehydrogenase [ubiquinone] 1 beta subcomplex subunit 2, mitochondrial (105 aa).

Residues 1–33 (MSALTRLVPFGRVGGRLLRGCRARAAGDSGVRH) constitute a mitochondrion transit peptide. The disordered stretch occupies residues 86–105 (YPDPSQWTDEELGIPPDDED). The span at 93 to 105 (TDEELGIPPDDED) shows a compositional bias: acidic residues.

This sequence belongs to the complex I NDUFB2 subunit family. In terms of assembly, complex I is composed of 45 different subunits.

The protein localises to the mitochondrion inner membrane. Functionally, accessory subunit of the mitochondrial membrane respiratory chain NADH dehydrogenase (Complex I), that is believed not to be involved in catalysis. Complex I functions in the transfer of electrons from NADH to the respiratory chain. The immediate electron acceptor for the enzyme is believed to be ubiquinone. The protein is NADH dehydrogenase [ubiquinone] 1 beta subcomplex subunit 2, mitochondrial (Ndufb2) of Mus musculus (Mouse).